A 534-amino-acid chain; its full sequence is CD276 antigen (534 aa).

The N-terminal stretch at Met1–Ala28 is a signal peptide. Positions Leu29–Ala139 constitute an Ig-like V-type 1 domain. Residues Leu29 to Ala466 lie on the Extracellular side of the membrane. 4 disulfides stabilise this stretch: Cys50–Cys122, Cys165–Cys220, Cys268–Cys340, and Cys383–Cys438. Residues Asn104, Asn189, Asn215, Asn322, Asn407, and Asn433 are each glycosylated (N-linked (GlcNAc...) asparagine). An Ig-like C2-type 1 domain is found at Pro145–Thr238. The Ig-like V-type 2 domain occupies Pro243–Ala357. The region spanning Pro363–Thr456 is the Ig-like C2-type 2 domain. Residues Leu467 to Val487 form a helical membrane-spanning segment. Topologically, residues Cys488 to Ala534 are cytoplasmic. The segment covering Glu498–Gly510 has biased composition (acidic residues). Residues Glu498 to Ala534 are disordered. Phosphoserine is present on Ser525.

It belongs to the immunoglobulin superfamily. BTN/MOG family. Interacts with TREML2 and this interaction enhances T-cell activation. Ubiquitous but not detectable in peripheral blood lymphocytes or granulocytes. Weakly expressed in resting monocytes. Expressed in dendritic cells derived from monocytes. Expressed in epithelial cells of sinonasal tissue. Expressed in extravillous trophoblast cells and Hofbauer cells of the first trimester placenta and term placenta.

It localises to the membrane. May participate in the regulation of T-cell-mediated immune response. May play a protective role in tumor cells by inhibiting natural-killer mediated cell lysis as well as a role of marker for detection of neuroblastoma cells. May be involved in the development of acute and chronic transplant rejection and in the regulation of lymphocytic activity at mucosal surfaces. Could also play a key role in providing the placenta and fetus with a suitable immunological environment throughout pregnancy. Both isoform 1 and isoform 2 appear to be redundant in their ability to modulate CD4 T-cell responses. Isoform 2 is shown to enhance the induction of cytotoxic T-cells and selectively stimulates interferon gamma production in the presence of T-cell receptor signaling. In Homo sapiens (Human), this protein is CD276 antigen (CD276).